We begin with the raw amino-acid sequence, 225 residues long: NAD(P)H-quinone oxidoreductase subunit K, chloroplastic (225 aa).

Positions 43, 44, 108, and 139 each coordinate [4Fe-4S] cluster.

The protein belongs to the complex I 20 kDa subunit family. In terms of assembly, NDH is composed of at least 16 different subunits, 5 of which are encoded in the nucleus. It depends on [4Fe-4S] cluster as a cofactor.

The protein localises to the plastid. It is found in the chloroplast thylakoid membrane. The enzyme catalyses a plastoquinone + NADH + (n+1) H(+)(in) = a plastoquinol + NAD(+) + n H(+)(out). It catalyses the reaction a plastoquinone + NADPH + (n+1) H(+)(in) = a plastoquinol + NADP(+) + n H(+)(out). Functionally, NDH shuttles electrons from NAD(P)H:plastoquinone, via FMN and iron-sulfur (Fe-S) centers, to quinones in the photosynthetic chain and possibly in a chloroplast respiratory chain. The immediate electron acceptor for the enzyme in this species is believed to be plastoquinone. Couples the redox reaction to proton translocation, and thus conserves the redox energy in a proton gradient. The polypeptide is NAD(P)H-quinone oxidoreductase subunit K, chloroplastic (Oenothera argillicola (Appalachian evening primrose)).